The sequence spans 666 residues: Transmembrane protein 201 (666 aa).

M1 is modified (N-acetylmethionine). Residues 1–213 (MEGVSALLAR…FSSAVKSPVQ (213 aa)) are Nuclear-facing. Residues 214 to 234 (VILLRALAFLACAFLLTTALY) traverse the membrane as a helical segment. Residues 235–297 (GASGHFAPGT…EAWAFGQSHQ (63 aa)) are Perinuclear space-facing. Residues 298 to 318 (TGVVALGLLTCLLAMLLAGRI) traverse the membrane as a helical segment. The Nuclear segment spans residues 319–322 (RLRR). Residues 323–343 (IDAFCTCLWALLLGLHLAEQH) form a helical membrane-spanning segment. The Perinuclear space portion of the chain corresponds to 344 to 356 (LQAASPSWLDTLK). Residues 357–374 (FSTTSLCCLVGFTAAVAT) form a helical membrane-spanning segment. The Nuclear portion of the chain corresponds to 375–644 (RKATGPRRFR…GRFGPSLVRG (270 aa)). 7 positions are modified to phosphoserine: S441, S444, S450, S454, S466, S477, and S480. Positions 502 to 581 (PLPSPAPSVA…PPHVPRKPPL (80 aa)) are disordered. Positions 508 to 520 (PSVAGSVASSSGS) are enriched in low complexity. S529 is subject to Phosphoserine. A helical transmembrane segment spans residues 645–665 (LLAVSLAANALFTSVFLYQSL). Residue R666 is a topological domain, perinuclear space.

Belongs to the TMEM201 family. As to quaternary structure, interacts with SUN2 and LMNA. May bind to Ran GTPase; has a greater affinity for Ran-GTP over Ran-GDP. In terms of assembly, interacts with EMD.

Its subcellular location is the nucleus inner membrane. The protein resides in the cytoplasm. The protein localises to the cytoskeleton. It is found in the spindle pole. Functionally, critical regulator of angiogenesis and endothelial cell (EC) migration. Promotes the migration of endothelial cells, which is essential for angiogenesis. Interacts with the linker of nucleoskeleton and cytoskeleton (LINC) complex, which plays a vital role in connecting the cell's cytoskeleton to the nuclear envelope. This interaction is essential for maintaining cellular structure and facilitating the movement of endothelial cells, which is critical for proper vascular development. Involved in nuclear movement during fibroblast polarization and migration. Overexpression can recruit Ran GTPase to the nuclear periphery. May define a distinct membrane domain in the vicinity of the mitotic spindle. Involved in the organization of the nuclear envelope implicating EMD, SUN1 and A-type lamina. The polypeptide is Transmembrane protein 201 (TMEM201) (Homo sapiens (Human)).